We begin with the raw amino-acid sequence, 56 residues long: Large ribosomal subunit protein bL32 (56 aa).

The interval methionine 1 to glutamine 26 is disordered. Positions lysine 7–arginine 16 are enriched in basic residues.

It belongs to the bacterial ribosomal protein bL32 family.

The sequence is that of Large ribosomal subunit protein bL32 from Shewanella amazonensis (strain ATCC BAA-1098 / SB2B).